The sequence spans 1939 residues: Myosin-4 (1939 aa).

The Myosin N-terminal SH3-like domain maps to 33 to 82 (DAKSSVFVVDAKESYVKATVQSREGGKVTAKTEGGATVTVKDDQVFSMNP). Residue serine 36 is modified to Phosphoserine. Threonine 64 and threonine 69 each carry phosphothreonine. At serine 79 the chain carries Phosphoserine. Positions 86–782 (DKIEDMAMMT…LLGTLEEMRD (697 aa)) constitute a Myosin motor domain. At lysine 130 the chain carries N6,N6,N6-trimethyllysine. Position 179-186 (179-186 (GESGAGKT)) interacts with ATP. Tyrosine 389 bears the Phosphotyrosine mark. Position 391 is a phosphothreonine (threonine 391). The residue at position 392 (serine 392) is a Phosphoserine. Threonine 419 is modified (phosphothreonine). Phosphotyrosine is present on tyrosine 424. Serine 625 is modified (phosphoserine). Residues 659 to 681 (LNKLMTNLKSTHPHFVRCLIPNE) form an actin-binding region. A Pros-methylhistidine modification is found at histidine 757. An actin-binding region spans residues 761–775 (KFGHTKVFFKAGLLG). Threonine 776 is modified (phosphothreonine). The IQ domain maps to 785-814 (LAQLITRTQAVCRGYLMRVEFKKMMERRES). The stretch at 843–1939 (LLKSAETEKE…EVHTKVISEE (1097 aa)) forms a coiled coil. Phosphoserine occurs at positions 1092 and 1096. Disordered regions lie at residues 1128 to 1147 (AERA…SREL) and 1153 to 1172 (RLEE…KKRE). Phosphoserine occurs at positions 1162 and 1237. Threonine 1241 carries the phosphothreonine modification. Serine 1243 is subject to Phosphoserine. Residue threonine 1255 is modified to Phosphothreonine. Serine 1261 carries the phosphoserine modification. Phosphothreonine is present on threonine 1265. The disordered stretch occupies residues 1276–1299 (ELSTQKARLHTESGEFSRQLDEKD). At serine 1278 the chain carries Phosphoserine. Residues 1284–1299 (LHTESGEFSRQLDEKD) are compositionally biased toward basic and acidic residues. Threonine 1286 carries the post-translational modification Phosphothreonine. Serine 1288, serine 1292, serine 1303, serine 1306, and serine 1413 each carry phosphoserine. Tyrosine 1464 bears the Phosphotyrosine mark. A Phosphothreonine modification is found at threonine 1467. The residue at position 1474 (serine 1474) is a Phosphoserine. Position 1492 is a phosphotyrosine (tyrosine 1492). Position 1495 is a phosphoserine (serine 1495). Threonine 1501 is subject to Phosphothreonine. Position 1514 is a phosphoserine (serine 1514). Threonine 1517 carries the phosphothreonine modification. A phosphoserine mark is found at serine 1542, serine 1547, serine 1554, serine 1574, serine 1600, serine 1603, serine 1714, and serine 1726. 2 positions are modified to phosphothreonine: threonine 1730 and threonine 1736. Serine 1739 carries the phosphoserine modification.

It belongs to the TRAFAC class myosin-kinesin ATPase superfamily. Myosin family. As to quaternary structure, muscle myosin is a hexameric protein that consists of 2 heavy chain subunits (MHC), 2 alkali light chain subunits (MLC) and 2 regulatory light chain subunits (MLC-2). Expressed in type 2b myofibers in the tibialis anterior muscle (at protein level).

The protein localises to the cytoplasm. It localises to the myofibril. In terms of biological role, muscle contraction. The chain is Myosin-4 (Myh4) from Mus musculus (Mouse).